A 120-amino-acid chain; its full sequence is Peptidyl-tRNA hydrolase (120 aa).

It belongs to the PTH2 family.

It localises to the cytoplasm. It carries out the reaction an N-acyl-L-alpha-aminoacyl-tRNA + H2O = an N-acyl-L-amino acid + a tRNA + H(+). In terms of biological role, the natural substrate for this enzyme may be peptidyl-tRNAs which drop off the ribosome during protein synthesis. This chain is Peptidyl-tRNA hydrolase, found in Sulfolobus acidocaldarius (strain ATCC 33909 / DSM 639 / JCM 8929 / NBRC 15157 / NCIMB 11770).